Here is a 156-residue protein sequence, read N- to C-terminus: Small ribosomal subunit protein uS7 (156 aa).

It belongs to the universal ribosomal protein uS7 family. Part of the 30S ribosomal subunit. Contacts proteins S9 and S11.

Functionally, one of the primary rRNA binding proteins, it binds directly to 16S rRNA where it nucleates assembly of the head domain of the 30S subunit. Is located at the subunit interface close to the decoding center, probably blocks exit of the E-site tRNA. The protein is Small ribosomal subunit protein uS7 of Moorella thermoacetica (strain ATCC 39073 / JCM 9320).